The chain runs to 197 residues: Large ribosomal subunit protein uL10 (197 aa).

Positions 162–197 (GGASAPAAEEAPAAEEAAAEEVAAPAEAAEAATEEN) are disordered. Residues 163–197 (GASAPAAEEAPAAEEAAAEEVAAPAEAAEAATEEN) are compositionally biased toward low complexity.

The protein belongs to the universal ribosomal protein uL10 family. Part of the ribosomal stalk of the 50S ribosomal subunit. The N-terminus interacts with L11 and the large rRNA to form the base of the stalk. The C-terminus forms an elongated spine to which L12 dimers bind in a sequential fashion forming a multimeric L10(L12)X complex.

Functionally, forms part of the ribosomal stalk, playing a central role in the interaction of the ribosome with GTP-bound translation factors. The chain is Large ribosomal subunit protein uL10 from Paenarthrobacter aurescens (strain TC1).